The chain runs to 152 residues: Superoxide dismutase [Cu-Zn] 2 (152 aa).

3 residues coordinate Cu cation: His45, His47, and His62. The tract at residues 53–81 (TNGSMSTGPHFNPDGKQHGAPEDANRHAG) is disordered. His62, His70, His79, and Asp82 together coordinate Zn(2+). Residues 65–81 (PDGKQHGAPEDANRHAG) are compositionally biased toward basic and acidic residues. A Cu cation-binding site is contributed by His119.

This sequence belongs to the Cu-Zn superoxide dismutase family. Homodimer. Cu cation serves as cofactor. The cofactor is Zn(2+).

It is found in the cytoplasm. It catalyses the reaction 2 superoxide + 2 H(+) = H2O2 + O2. Its function is as follows. Destroys radicals which are normally produced within the cells and which are toxic to biological systems. In Brassica juncea (Indian mustard), this protein is Superoxide dismutase [Cu-Zn] 2 (SODCC2).